We begin with the raw amino-acid sequence, 95 residues long: Probable dolichol-phosphate mannosyltransferase subunit 3 (95 aa).

Helical transmembrane passes span 10–30 and 44–64; these read AHVILFVLVWLLAYTDVVPVL and APFFAVLFLGIYAVFNVVYGV.

It belongs to the DPM3 family.

Its subcellular location is the endoplasmic reticulum membrane. It participates in protein modification; protein glycosylation. Functionally, stabilizer subunit of the dolichol-phosphate-mannose synthase complex. The chain is Probable dolichol-phosphate mannosyltransferase subunit 3 (dpm-3) from Caenorhabditis elegans.